The following is a 69-amino-acid chain: MELLIPLSLLGLYLFSGTRDSVHKGEVKDDLKEKPIKVNFNLTDSTKVDHKTHLKQYSSLKPGDTLEIL.

Positions 1 to 21 (MELLIPLSLLGLYLFSGTRDS) are cleaved as a signal peptide. Residue N41 is glycosylated (N-linked (GlcNAc...) asparagine).

Its subcellular location is the secreted. This is an uncharacterized protein from Dictyostelium discoideum (Social amoeba).